Here is a 438-residue protein sequence, read N- to C-terminus: tRNA modification GTPase MnmE (438 aa).

3 residues coordinate (6S)-5-formyl-5,6,7,8-tetrahydrofolate: arginine 20, glutamate 76, and lysine 115. The region spanning asparagine 210 to aspartate 370 is the TrmE-type G domain. Asparagine 220 contributes to the K(+) binding site. GTP contacts are provided by residues asparagine 220–threonine 225, threonine 239–threonine 245, and aspartate 264–glycine 267. Residue serine 224 participates in Mg(2+) binding. K(+)-binding residues include threonine 239, isoleucine 241, and threonine 244. A Mg(2+)-binding site is contributed by threonine 245. A (6S)-5-formyl-5,6,7,8-tetrahydrofolate-binding site is contributed by lysine 438.

Belongs to the TRAFAC class TrmE-Era-EngA-EngB-Septin-like GTPase superfamily. TrmE GTPase family. As to quaternary structure, homodimer. Heterotetramer of two MnmE and two MnmG subunits. K(+) is required as a cofactor.

The protein localises to the cytoplasm. In terms of biological role, exhibits a very high intrinsic GTPase hydrolysis rate. Involved in the addition of a carboxymethylaminomethyl (cmnm) group at the wobble position (U34) of certain tRNAs, forming tRNA-cmnm(5)s(2)U34. This Carsonella ruddii (strain PV) protein is tRNA modification GTPase MnmE.